Consider the following 622-residue polypeptide: MKGQETRGFQSEVKQLLHLMIHSLYSNKEIFLRELISNASDAADKLRFRALSNPELFEGDGELRVRLSFDKEKRTLTLSDNGIGMTRDEVIDNLGTIAKSGTKAFLESIGSDQAKDSQLIGQFGVGFYSAFIVADKVTVRTRAAGAPADTGVFWESAGEGDYTIADITKDERGTEITLHLREGEDEYLDDWRLRSVISKYSDHIALPVEIQVKNEEDGTVTWEKINKAQALWTRGKAEISDDEYKAFYKHIAHDFTDPLSWSHNRVEGKQEYTSLLYIPAQAPWDMWNRDHKHGLKLYVQRVFIMDEAEQFMPNYLRFVRGLIDSNDLPLNVSREILQDSRITQNLRSALTKRVLQMLEKLAKDDAEKYQQFWQQFGMALKEGPAEDGSNKETIAKLLRFASTHTDSSAQTVSLEDYVSRMAEGQEKIYYITADSYAAAKSSPHLELFRKKGIEVLLLSDRIDEWMMSYLTEFEGKAFQSVSKADDSLNKLADEENPEQQEAEKALEPFVERVKTLLGERVKDVRLTHRLTDTPAIVTTDADEMSTQMAKLFAAAGQQAPEVKYIFELNPDHGLVKRAAEVTDDTQFAQWVELLLDQALLAERGTLEDPNQFIRRMNQLLTA.

An a; substrate-binding region spans residues 1–334 (MKGQETRGFQ…SNDLPLNVSR (334 aa)). Residues 335–550 (EILQDSRITQ…ADEMSTQMAK (216 aa)) are b. Residues 551–622 (LFAAAGQQAP…IRRMNQLLTA (72 aa)) form a c region.

Belongs to the heat shock protein 90 family. Homodimer.

The protein resides in the cytoplasm. In terms of biological role, molecular chaperone. Has ATPase activity. The chain is Chaperone protein HtpG from Yersinia pestis.